Reading from the N-terminus, the 386-residue chain is Succinate--CoA ligase [ADP-forming] subunit beta (386 aa).

Positions 9-244 (KEILKQYGVK…LDEEDEKEIE (236 aa)) constitute an ATP-grasp domain. ATP is bound by residues K46, 53-55 (GRG), E99, C102, and E107. Residues N199 and D213 each coordinate Mg(2+). Residues N264 and 321–323 (GIM) each bind substrate.

This sequence belongs to the succinate/malate CoA ligase beta subunit family. Heterotetramer of two alpha and two beta subunits. Requires Mg(2+) as cofactor.

It carries out the reaction succinate + ATP + CoA = succinyl-CoA + ADP + phosphate. The enzyme catalyses GTP + succinate + CoA = succinyl-CoA + GDP + phosphate. Its pathway is carbohydrate metabolism; tricarboxylic acid cycle; succinate from succinyl-CoA (ligase route): step 1/1. Functionally, succinyl-CoA synthetase functions in the citric acid cycle (TCA), coupling the hydrolysis of succinyl-CoA to the synthesis of either ATP or GTP and thus represents the only step of substrate-level phosphorylation in the TCA. The beta subunit provides nucleotide specificity of the enzyme and binds the substrate succinate, while the binding sites for coenzyme A and phosphate are found in the alpha subunit. In Brevibacillus brevis (strain 47 / JCM 6285 / NBRC 100599), this protein is Succinate--CoA ligase [ADP-forming] subunit beta.